Reading from the N-terminus, the 245-residue chain is Enolase-phosphatase E1 (245 aa).

Belongs to the HAD-like hydrolase superfamily. MasA/MtnC family. As to quaternary structure, monomer. Requires Mg(2+) as cofactor.

It carries out the reaction 5-methylsulfanyl-2,3-dioxopentyl phosphate + H2O = 1,2-dihydroxy-5-(methylsulfanyl)pent-1-en-3-one + phosphate. It participates in amino-acid biosynthesis; L-methionine biosynthesis via salvage pathway; L-methionine from S-methyl-5-thio-alpha-D-ribose 1-phosphate: step 3/6. The protein operates within amino-acid biosynthesis; L-methionine biosynthesis via salvage pathway; L-methionine from S-methyl-5-thio-alpha-D-ribose 1-phosphate: step 4/6. In terms of biological role, bifunctional enzyme that catalyzes the enolization of 2,3-diketo-5-methylthiopentyl-1-phosphate (DK-MTP-1-P) into the intermediate 2-hydroxy-3-keto-5-methylthiopentenyl-1-phosphate (HK-MTPenyl-1-P), which is then dephosphorylated to form the acireductone 1,2-dihydroxy-3-keto-5-methylthiopentene (DHK-MTPene). In Prochlorococcus marinus (strain MIT 9313), this protein is Enolase-phosphatase E1.